The primary structure comprises 404 residues: MDYSEIMVRHGELSTKGKNRMRFINKLKNNIQDVLAPFPAITVRSDRDRTHVSLNGTDYQPVVEALKLVFGVQALSPVYKLEKSVPLLVTAVQDIMTSLYRDGLTFKIATKRSDHAFELDSRELNSLLGGAVFEVLPNIQAQMKHPDVTLKVEIRDEAAYISYEEIKGAGGLPVGTSGKGMLMLSGGIDSPVAGYLALKRGLDIEVVHFASPPYTSPGALAKAQDLTRRLTRFGGNIQFIEVPFTEIQEEIKNKAPEAYLMTLTRRFMMRITDAIREQRKGLVIVNGESLGQVASQTLESMQAINAVTSTPIIRPVVTMDKLEIIEMAQAIDTFDISIQPFEDCCTIFAPDRPKTNPKLGNAEKYEERFDIDGLVQRAVSGIVVTEITPEIVNDEVENLIDALL.

One can recognise a THUMP domain in the interval 60–165 (QPVVEALKLV…DEAAYISYEE (106 aa)). ATP contacts are provided by residues 183 to 184 (ML), 208 to 209 (HF), Arg-265, Gly-287, and Gln-296.

It belongs to the ThiI family.

The protein resides in the cytoplasm. The enzyme catalyses [ThiI sulfur-carrier protein]-S-sulfanyl-L-cysteine + a uridine in tRNA + 2 reduced [2Fe-2S]-[ferredoxin] + ATP + H(+) = [ThiI sulfur-carrier protein]-L-cysteine + a 4-thiouridine in tRNA + 2 oxidized [2Fe-2S]-[ferredoxin] + AMP + diphosphate. The catalysed reaction is [ThiS sulfur-carrier protein]-C-terminal Gly-Gly-AMP + S-sulfanyl-L-cysteinyl-[cysteine desulfurase] + AH2 = [ThiS sulfur-carrier protein]-C-terminal-Gly-aminoethanethioate + L-cysteinyl-[cysteine desulfurase] + A + AMP + 2 H(+). The protein operates within cofactor biosynthesis; thiamine diphosphate biosynthesis. Functionally, catalyzes the ATP-dependent transfer of a sulfur to tRNA to produce 4-thiouridine in position 8 of tRNAs, which functions as a near-UV photosensor. Also catalyzes the transfer of sulfur to the sulfur carrier protein ThiS, forming ThiS-thiocarboxylate. This is a step in the synthesis of thiazole, in the thiamine biosynthesis pathway. The sulfur is donated as persulfide by IscS. This Streptococcus pyogenes serotype M5 (strain Manfredo) protein is Probable tRNA sulfurtransferase.